The primary structure comprises 449 residues: UDP-N-acetylmuramate--L-alanine ligase (449 aa).

110–116 (GTHGKTT) is an ATP binding site.

This sequence belongs to the MurCDEF family.

It is found in the cytoplasm. The catalysed reaction is UDP-N-acetyl-alpha-D-muramate + L-alanine + ATP = UDP-N-acetyl-alpha-D-muramoyl-L-alanine + ADP + phosphate + H(+). It functions in the pathway cell wall biogenesis; peptidoglycan biosynthesis. Cell wall formation. This is UDP-N-acetylmuramate--L-alanine ligase from Desulfitobacterium hafniense (strain Y51).